We begin with the raw amino-acid sequence, 419 residues long: UDP-N-acetylglucosamine 1-carboxyvinyltransferase (419 aa).

22–23 (KN) provides a ligand contact to phosphoenolpyruvate. Residue R95 coordinates UDP-N-acetyl-alpha-D-glucosamine. The Proton donor role is filled by C119. 2-(S-cysteinyl)pyruvic acid O-phosphothioketal is present on C119. UDP-N-acetyl-alpha-D-glucosamine contacts are provided by residues 164-167 (KVSV), D308, and I330.

It belongs to the EPSP synthase family. MurA subfamily.

The protein resides in the cytoplasm. The catalysed reaction is phosphoenolpyruvate + UDP-N-acetyl-alpha-D-glucosamine = UDP-N-acetyl-3-O-(1-carboxyvinyl)-alpha-D-glucosamine + phosphate. It participates in cell wall biogenesis; peptidoglycan biosynthesis. Cell wall formation. Adds enolpyruvyl to UDP-N-acetylglucosamine. The chain is UDP-N-acetylglucosamine 1-carboxyvinyltransferase from Rickettsia prowazekii (strain Madrid E).